Here is a 278-residue protein sequence, read N- to C-terminus: Glucosamine-6-phosphate deaminase (278 aa).

The Proton acceptor; for enolization step role is filled by Asp-72. The active-site For ring-opening step is the Asp-141. Catalysis depends on His-143, which acts as the Proton acceptor; for ring-opening step. Glu-148 serves as the catalytic For ring-opening step.

It belongs to the glucosamine/galactosamine-6-phosphate isomerase family. As to quaternary structure, homohexamer.

It localises to the cytoplasm. It catalyses the reaction alpha-D-glucosamine 6-phosphate + H2O = beta-D-fructose 6-phosphate + NH4(+). It functions in the pathway nucleotide-sugar biosynthesis; UDP-N-acetyl-alpha-D-glucosamine biosynthesis; alpha-D-glucosamine 6-phosphate from D-fructose 6-phosphate: step 1/1. In terms of biological role, catalyzes the reversible conversion of alpha-D-glucosamine 6-phosphate (GlcN-6P) into beta-D-fructose 6-phosphate (Fru-6P) and ammonium ion, a regulatory reaction step in de novo uridine diphosphate-N-acetyl-alpha-D-glucosamine (UDP-GlcNAc) biosynthesis via hexosamine pathway. This Aedes aegypti (Yellowfever mosquito) protein is Glucosamine-6-phosphate deaminase (Gnpda1).